Reading from the N-terminus, the 470-residue chain is Pyruvate kinase I (470 aa).

Arg32 serves as a coordination point for substrate. K(+) is bound by residues Asn34, Ser36, Asp66, and Thr67. 34–37 (NFSH) contacts ATP. 2 residues coordinate ATP: Arg73 and Lys156. Substrate is bound at residue Lys220. Glu222 contacts Mg(2+). Substrate contacts are provided by Gly245, Asp246, and Thr278. Asp246 lines the Mg(2+) pocket.

The protein belongs to the pyruvate kinase family. Homotetramer. Mg(2+) serves as cofactor. Requires K(+) as cofactor.

The catalysed reaction is pyruvate + ATP = phosphoenolpyruvate + ADP + H(+). It participates in carbohydrate degradation; glycolysis; pyruvate from D-glyceraldehyde 3-phosphate: step 5/5. With respect to regulation, belongs to type I PK; fructose 1,6-bisphosphate-activated. In terms of biological role, catalyzes the formation of pyruvate in the last step of glycolysis, it is irreversible under physiological conditions. The reaction is critical for the control of metabolic flux in the second part of glycolysis. This Salmonella typhimurium (strain LT2 / SGSC1412 / ATCC 700720) protein is Pyruvate kinase I (pykF).